A 514-amino-acid polypeptide reads, in one-letter code: Na(+)/H(+) antiporter NhaB (514 aa).

12 consecutive transmembrane segments (helical) span residues 23–43 (LALL…PFIA), 63–83 (PLLP…TSAA), 97–117 (LLLM…LFIF), 120–140 (LLLS…AAAF), 144–164 (FLDA…FYGI), 202–222 (LMMH…VGEP), 238–258 (FFLR…LTCM), 303–323 (AVIG…VGLI), 357–377 (LTVF…APII), 391–411 (LFYL…VGTI), 447–467 (ATPN…APLI), and 475–495 (VWMA…CVEF).

This sequence belongs to the NhaB Na(+)/H(+) (TC 2.A.34) antiporter family.

The protein resides in the cell inner membrane. The catalysed reaction is 2 Na(+)(in) + 3 H(+)(out) = 2 Na(+)(out) + 3 H(+)(in). In terms of biological role, na(+)/H(+) antiporter that extrudes sodium in exchange for external protons. This is Na(+)/H(+) antiporter NhaB from Salmonella gallinarum (strain 287/91 / NCTC 13346).